Here is a 163-residue protein sequence, read N- to C-terminus: Lipoprotein signal peptidase (163 aa).

A run of 4 helical transmembrane segments spans residues 9–29 (AWPW…SKYL), 42–62 (ILPF…SFLG), 67–87 (WQII…ILWL), and 93–113 (SEIM…GNFI). Residues D123 and D141 contribute to the active site. A helical membrane pass occupies residues 137–157 (FNVADSAICVGVFLLIVHMLL).

Belongs to the peptidase A8 family.

The protein localises to the cell inner membrane. It catalyses the reaction Release of signal peptides from bacterial membrane prolipoproteins. Hydrolyzes -Xaa-Yaa-Zaa-|-(S,diacylglyceryl)Cys-, in which Xaa is hydrophobic (preferably Leu), and Yaa (Ala or Ser) and Zaa (Gly or Ala) have small, neutral side chains.. It functions in the pathway protein modification; lipoprotein biosynthesis (signal peptide cleavage). Functionally, this protein specifically catalyzes the removal of signal peptides from prolipoproteins. This chain is Lipoprotein signal peptidase, found in Coxiella burnetii (strain RSA 493 / Nine Mile phase I).